The following is a 378-amino-acid chain: MNNTEYYDRLGVSKDASQDDIKKAYRKMSKKYHPDINKEAGAEQKYKDVQEAYETLSDSQKRAAYDQYGAAGAQGGFGGGAGGFGGFDGGGFGGFEDIFSSFFGGGGSRNPNAPRQGDDLQYRVNLSFEEAVFGVEKEVSYNREATCGTCLGSGAKPGTAPVTCRKCHGSGVMTIDTQTPLGMMRRQVTCDICHGSGKEIKEPCQTCHGTGHEKQAHKVSVKIPAGVETGQQIRLQGQGEAGFNGGPYGDLFVILNVLPSKQFERNGSTIYYNLDISFTQAALGDTVEIPTVHGDVEMAIPAGTQTGKTFRLKGKGAPKLRGGGQGDQHVTVNIVTPTKLNDAQREALQAFAEASGEKMLHPKKKGFFDKVKDALEDI.

Residues 5-69 (EYYDRLGVSK…QKRAAYDQYG (65 aa)) form the J domain. The CR-type zinc finger occupies 134–216 (GVEKEVSYNR…CHGTGHEKQA (83 aa)). Positions 147, 150, 164, 167, 190, 193, 204, and 207 each coordinate Zn(2+). 4 CXXCXGXG motif repeats span residues 147–154 (CGTCLGSG), 164–171 (CRKCHGSG), 190–197 (CDICHGSG), and 204–211 (CQTCHGTG).

The protein belongs to the DnaJ family. As to quaternary structure, homodimer. Requires Zn(2+) as cofactor.

It localises to the cytoplasm. In terms of biological role, participates actively in the response to hyperosmotic and heat shock by preventing the aggregation of stress-denatured proteins and by disaggregating proteins, also in an autonomous, DnaK-independent fashion. Unfolded proteins bind initially to DnaJ; upon interaction with the DnaJ-bound protein, DnaK hydrolyzes its bound ATP, resulting in the formation of a stable complex. GrpE releases ADP from DnaK; ATP binding to DnaK triggers the release of the substrate protein, thus completing the reaction cycle. Several rounds of ATP-dependent interactions between DnaJ, DnaK and GrpE are required for fully efficient folding. Also involved, together with DnaK and GrpE, in the DNA replication of plasmids through activation of initiation proteins. This chain is Chaperone protein DnaJ, found in Streptococcus pyogenes serotype M1.